Consider the following 253-residue polypeptide: FGFR1 oncogene partner 2 homolog (253 aa).

Positions 5–104 (IEKALADAKA…SALELIMSKY (100 aa)) form a coiled coil. Ser140 is subject to Phosphoserine. A coiled-coil region spans residues 160–223 (LERRHLEANQ…LREILQITRE (64 aa)). The interval 231 to 253 (DDASESTSLSALVTNSDLSLRKS) is disordered. Over residues 235 to 253 (ESTSLSALVTNSDLSLRKS) the composition is skewed to polar residues.

It belongs to the SIKE family.

It localises to the cytoplasm. In terms of biological role, may be involved in wound healing pathway. The sequence is that of FGFR1 oncogene partner 2 homolog (Fgfr1op2) from Mus musculus (Mouse).